Consider the following 510-residue polypeptide: Ribose import ATP-binding protein RbsA 1 (510 aa).

ABC transporter domains lie at 20–256 (LEMR…VGRD) and 266–510 (VTLG…TGNA). Residue 52-59 (GENGAGKS) participates in ATP binding.

This sequence belongs to the ABC transporter superfamily. Ribose importer (TC 3.A.1.2.1) family. The complex is composed of an ATP-binding protein (RbsA), two transmembrane proteins (RbsC) and a solute-binding protein (RbsB).

The protein resides in the cell inner membrane. The catalysed reaction is D-ribose(out) + ATP + H2O = D-ribose(in) + ADP + phosphate + H(+). Part of the ABC transporter complex RbsABC involved in ribose import. Responsible for energy coupling to the transport system. The polypeptide is Ribose import ATP-binding protein RbsA 1 (Agrobacterium fabrum (strain C58 / ATCC 33970) (Agrobacterium tumefaciens (strain C58))).